Reading from the N-terminus, the 31-residue chain is MEALVYTFLLIGTLGVIFFAIFFRESPRINK.

A helical transmembrane segment spans residues 3-23 (ALVYTFLLIGTLGVIFFAIFF).

The protein belongs to the PsbT family. As to quaternary structure, PSII is composed of 1 copy each of membrane proteins PsbA, PsbB, PsbC, PsbD, PsbE, PsbF, PsbH, PsbI, PsbJ, PsbK, PsbL, PsbM, PsbT, PsbY, PsbZ, Psb30/Ycf12, at least 3 peripheral proteins of the oxygen-evolving complex and a large number of cofactors. It forms dimeric complexes.

Its subcellular location is the plastid. The protein resides in the chloroplast thylakoid membrane. Its function is as follows. Found at the monomer-monomer interface of the photosystem II (PS II) dimer, plays a role in assembly and dimerization of PSII. PSII is a light-driven water plastoquinone oxidoreductase, using light energy to abstract electrons from H(2)O, generating a proton gradient subsequently used for ATP formation. The chain is Photosystem II reaction center protein T from Euglena gracilis.